A 218-amino-acid chain; its full sequence is Protein P9 (218 aa).

It is found in the virion membrane. The protein is Protein P9 (IX) of Pseudoalteromonas espejiana (Bacteriophage PM2).